The following is a 331-amino-acid chain: Uroporphyrinogen decarboxylase (331 aa).

Substrate contacts are provided by residues 22 to 26 (RQAGR), Asp71, Tyr145, Ser199, and His308.

This sequence belongs to the uroporphyrinogen decarboxylase family. As to quaternary structure, homodimer.

The protein resides in the cytoplasm. It catalyses the reaction uroporphyrinogen III + 4 H(+) = coproporphyrinogen III + 4 CO2. It participates in porphyrin-containing compound metabolism; protoporphyrin-IX biosynthesis; coproporphyrinogen-III from 5-aminolevulinate: step 4/4. Catalyzes the decarboxylation of four acetate groups of uroporphyrinogen-III to yield coproporphyrinogen-III. This Picrophilus torridus (strain ATCC 700027 / DSM 9790 / JCM 10055 / NBRC 100828 / KAW 2/3) protein is Uroporphyrinogen decarboxylase.